A 512-amino-acid polypeptide reads, in one-letter code: Monocarboxylate transporter 10 (512 aa).

A disordered region spans residues 1–44 (MVPSQEEPAAERETNEAQPPGPAPSDDAPLPGPGPSDVSDVAAE). The Cytoplasmic portion of the chain corresponds to 1–63 (MVPSQEEPAA…AGSEPPVPPE (63 aa)). Residues 64–84 (GGWGWLVMLAAMWCNGSVFGI) traverse the membrane as a helical segment. The Extracellular portion of the chain corresponds to 85-111 (QNAYGVLFVSMLDTFKAKDDDNMAFKT). The helical transmembrane segment at 112–132 (AWVGSLSMGMIFFCCPIVSVF) threads the bilayer. Topologically, residues 133-141 (TDMFGCRRT) are cytoplasmic. The chain crosses the membrane as a helical span at residues 142 to 162 (AVVGAAVGFIGLMSSSFVSSI). Residues 163–168 (EPLYLT) lie on the Extracellular side of the membrane. The chain crosses the membrane as a helical span at residues 169–189 (YGIIFACGCSFAYQPSLVILG). Topologically, residues 190 to 201 (HYFKKRLGLVNG) are cytoplasmic. Residues 202–222 (IVTAGSSVFTILLPLLLGNLI) form a helical membrane-spanning segment. Over 223-232 (SSVKLFNTLR) the chain is Extracellular. A helical membrane pass occupies residues 233 to 253 (ILCIFMFVLFLAGFTYRPLVP). Residues 254 to 291 (STKEKESGGSRSSFFSRRKLSPPKKVFNFALFKETTYA) are Cytoplasmic-facing. Residue S260 is modified to Phosphoserine. The helical transmembrane segment at 292–312 (VWAAGIPLALFGYFVPYVHLM) threads the bilayer. Residues 313–326 (NHVKERFQDVNNKE) are Extracellular-facing. Residues 327-347 (VLFMCIGITSGVGRLLFGRIA) form a helical membrane-spanning segment. The Cytoplasmic portion of the chain corresponds to 348-362 (DYLPGVKKVYLQVLS). A helical transmembrane segment spans residues 363–383 (FFFIGLMSMMIPLCSAFGALI). Residue A384 is a topological domain, extracellular. A helical membrane pass occupies residues 385 to 405 (VCLAMGLFDGCFISIMAPIAF). Over 406-416 (ELVGPQDASQA) the chain is Cytoplasmic. Residues 417–437 (IGFLLGFMSIPMTVGPPIAGL) form a helical membrane-spanning segment. At 438 to 448 (LHDKLGTYDVA) the chain is on the extracellular side. The chain crosses the membrane as a helical span at residues 449 to 469 (FYLAGIPPFVGGVVLCLIPWI). Over 470-512 (HSKKQRKISKNAGGEKMEKMLENQSSLLSGSSGIFKKDSASII) the chain is Cytoplasmic. S495, S498, S500, and S501 each carry phosphoserine.

The protein belongs to the major facilitator superfamily. Monocarboxylate porter (TC 2.A.1.13) family. Post-translationally, not N-glycosylated. Highly expressed in small intestine, particularly in jejunum and ileum, scarcely in colon and substantially in kidney, liver and skeletal muscle. In the brain expression is low and appears to be restricted to a subset of neurons, microglia cells, and oligodendrocytes.

It localises to the cell membrane. The protein resides in the basolateral cell membrane. The catalysed reaction is L-tryptophan(in) = L-tryptophan(out). It carries out the reaction L-tyrosine(in) = L-tyrosine(out). The enzyme catalyses L-phenylalanine(in) = L-phenylalanine(out). It catalyses the reaction 3,3',5-triiodo-L-thyronine(out) = 3,3',5-triiodo-L-thyronine(in). The catalysed reaction is L-thyroxine(out) = L-thyroxine(in). Sodium- and proton-independent thyroid hormones and aromatic acids transporter. Mediates both uptake and efflux of 3,5,3'-triiodothyronine (T3) and 3,5,3',5'-tetraiodothyronine (T4) with high affinity, suggesting a role in the homeostasis of thyroid hormone levels. Responsible for low affinity bidirectional transport of the aromatic amino acids, such as phenylalanine, tyrosine, tryptophan and L-3,4-dihydroxyphenylalanine (L-dopa). Plays an important role in homeostasis of aromatic amino acids. This chain is Monocarboxylate transporter 10 (Slc16a10), found in Mus musculus (Mouse).